Here is a 197-residue protein sequence, read N- to C-terminus: Pyridoxal 5'-phosphate synthase subunit PdxT (197 aa).

Residue 52 to 54 coordinates L-glutamine; it reads GES. The Nucleophile role is filled by C84. Residues R116 and 143 to 144 contribute to the L-glutamine site; that span reads IR. Active-site charge relay system residues include H179 and E181.

Belongs to the glutaminase PdxT/SNO family. In the presence of PdxS, forms a dodecamer of heterodimers. Only shows activity in the heterodimer.

It catalyses the reaction aldehydo-D-ribose 5-phosphate + D-glyceraldehyde 3-phosphate + L-glutamine = pyridoxal 5'-phosphate + L-glutamate + phosphate + 3 H2O + H(+). It carries out the reaction L-glutamine + H2O = L-glutamate + NH4(+). Its pathway is cofactor biosynthesis; pyridoxal 5'-phosphate biosynthesis. Functionally, catalyzes the hydrolysis of glutamine to glutamate and ammonia as part of the biosynthesis of pyridoxal 5'-phosphate. The resulting ammonia molecule is channeled to the active site of PdxS. The protein is Pyridoxal 5'-phosphate synthase subunit PdxT of Ignicoccus hospitalis (strain KIN4/I / DSM 18386 / JCM 14125).